A 318-amino-acid chain; its full sequence is NADH-ubiquinone oxidoreductase chain 1 (318 aa).

The next 8 membrane-spanning stretches (helical) occupy residues 2-22 (FMINILTLILPILLAVAFLTL), 70-90 (MFIIAPVLALTLALTMWSPLP), 100-120 (LGVLFMLAMSSLAVYSILWSG), 136-156 (VAQTISYEVTLAIILLSVLLM), 172-192 (LWLLFPSWPLAMMWFISTLAE), 222-242 (LFFLAEYANIIMMNMLTAILF), 253-273 (ELYTANLIIKTLLLTMSFLWI), and 294-314 (LPLTLALCMWHISLPIMTASI).

The protein belongs to the complex I subunit 1 family. Core subunit of respiratory chain NADH dehydrogenase (Complex I) which is composed of 45 different subunits.

The protein localises to the mitochondrion inner membrane. It catalyses the reaction a ubiquinone + NADH + 5 H(+)(in) = a ubiquinol + NAD(+) + 4 H(+)(out). Its function is as follows. Core subunit of the mitochondrial membrane respiratory chain NADH dehydrogenase (Complex I) which catalyzes electron transfer from NADH through the respiratory chain, using ubiquinone as an electron acceptor. Essential for the catalytic activity and assembly of complex I. This is NADH-ubiquinone oxidoreductase chain 1 (MT-ND1) from Balaenoptera physalus (Fin whale).